Reading from the N-terminus, the 510-residue chain is ATP synthase subunit alpha (510 aa).

171–178 is an ATP binding site; it reads GDRQTGKT.

It belongs to the ATPase alpha/beta chains family. In terms of assembly, F-type ATPases have 2 components, CF(1) - the catalytic core - and CF(0) - the membrane proton channel. CF(1) has five subunits: alpha(3), beta(3), gamma(1), delta(1), epsilon(1). CF(0) has three main subunits: a(1), b(2) and c(9-12). The alpha and beta chains form an alternating ring which encloses part of the gamma chain. CF(1) is attached to CF(0) by a central stalk formed by the gamma and epsilon chains, while a peripheral stalk is formed by the delta and b chains.

It is found in the cell inner membrane. The enzyme catalyses ATP + H2O + 4 H(+)(in) = ADP + phosphate + 5 H(+)(out). Functionally, produces ATP from ADP in the presence of a proton gradient across the membrane. The alpha chain is a regulatory subunit. The chain is ATP synthase subunit alpha from Phenylobacterium zucineum (strain HLK1).